The chain runs to 571 residues: Kelch-like protein 28 (571 aa).

The BTB domain occupies 35 to 102; sequence CDIILRVGDV…AYTGTVFISQ (68 aa). Kelch repeat units follow at residues 284–331, 332–386, 387–433, 435–479, 480–526, and 528–570; these read VLCA…VLDQ, KVFV…VLAG, EVFA…VLDG, LYAI…VMLG, FIFV…VIDN, and LYVV…GLTA.

This is Kelch-like protein 28 (Klhl28) from Mus musculus (Mouse).